Consider the following 311-residue polypeptide: Porphobilinogen deaminase (311 aa).

Residue cysteine 240 is modified to S-(dipyrrolylmethanemethyl)cysteine.

Belongs to the HMBS family. As to quaternary structure, monomer. Dipyrromethane is required as a cofactor.

The catalysed reaction is 4 porphobilinogen + H2O = hydroxymethylbilane + 4 NH4(+). It participates in porphyrin-containing compound metabolism; protoporphyrin-IX biosynthesis; coproporphyrinogen-III from 5-aminolevulinate: step 2/4. Functionally, tetrapolymerization of the monopyrrole PBG into the hydroxymethylbilane pre-uroporphyrinogen in several discrete steps. The polypeptide is Porphobilinogen deaminase (Natranaerobius thermophilus (strain ATCC BAA-1301 / DSM 18059 / JW/NM-WN-LF)).